A 535-amino-acid polypeptide reads, in one-letter code: Probable monogalactosyldiacylglycerol synthase, chloroplastic (535 aa).

The N-terminal 113 residues, 1–113, are a transit peptide targeting the chloroplast; that stretch reads MMQHSSSVTQ…KIPLGFASVG (113 aa).

Belongs to the glycosyltransferase 28 family.

The protein localises to the plastid. It localises to the chloroplast membrane. The enzyme catalyses a 1,2-diacyl-sn-glycerol + UDP-alpha-D-galactose = a 1,2-diacyl-3-O-(beta-D-galactosyl)-sn-glycerol + UDP + H(+). Functionally, involved in the synthesis of the major structural component of photosynthetic membranes. This chain is Probable monogalactosyldiacylglycerol synthase, chloroplastic (MGD A), found in Nicotiana tabacum (Common tobacco).